The following is a 190-amino-acid chain: Orotate phosphoribosyltransferase (190 aa).

Residue glutamate 114–serine 122 coordinates 5-phospho-alpha-D-ribose 1-diphosphate. Residues threonine 118 and arginine 146 each coordinate orotate.

This sequence belongs to the purine/pyrimidine phosphoribosyltransferase family. PyrE subfamily. As to quaternary structure, homodimer. The cofactor is Mg(2+).

It catalyses the reaction orotidine 5'-phosphate + diphosphate = orotate + 5-phospho-alpha-D-ribose 1-diphosphate. It participates in pyrimidine metabolism; UMP biosynthesis via de novo pathway; UMP from orotate: step 1/2. Catalyzes the transfer of a ribosyl phosphate group from 5-phosphoribose 1-diphosphate to orotate, leading to the formation of orotidine monophosphate (OMP). The sequence is that of Orotate phosphoribosyltransferase from Thermoanaerobacter sp. (strain X514).